A 346-amino-acid chain; its full sequence is Insertion element IS476 uncharacterized 39.2 kDa protein (346 aa).

The tract at residues 1 to 50 (MVSARPAFISGGPSTGGWRPTRQAAERTGGPEHSIEEVAGRGAPGHRSAE) is disordered. The span at 29-39 (GGPEHSIEEVA) shows a compositional bias: basic and acidic residues. The region spanning 169 to 329 (ASSMPNDTWS…IPPAQFAANY (161 aa)) is the Integrase catalytic domain.

This Xanthomonas euvesicatoria protein is Insertion element IS476 uncharacterized 39.2 kDa protein.